We begin with the raw amino-acid sequence, 270 residues long: Putative pyruvate, phosphate dikinase regulatory protein 2 (270 aa).

151 to 158 (GVSRTSKT) provides a ligand contact to ADP.

Belongs to the pyruvate, phosphate/water dikinase regulatory protein family. PDRP subfamily.

It catalyses the reaction N(tele)-phospho-L-histidyl/L-threonyl-[pyruvate, phosphate dikinase] + ADP = N(tele)-phospho-L-histidyl/O-phospho-L-threonyl-[pyruvate, phosphate dikinase] + AMP + H(+). It carries out the reaction N(tele)-phospho-L-histidyl/O-phospho-L-threonyl-[pyruvate, phosphate dikinase] + phosphate + H(+) = N(tele)-phospho-L-histidyl/L-threonyl-[pyruvate, phosphate dikinase] + diphosphate. Bifunctional serine/threonine kinase and phosphorylase involved in the regulation of the pyruvate, phosphate dikinase (PPDK) by catalyzing its phosphorylation/dephosphorylation. This Listeria monocytogenes serotype 4b (strain F2365) protein is Putative pyruvate, phosphate dikinase regulatory protein 2.